Consider the following 472-residue polypeptide: Ammonium transporter Rh type C (472 aa).

The Cytoplasmic portion of the chain corresponds to 1–9; the sequence is MAWNTNLRW. Residues 10-30 traverse the membrane as a helical segment; sequence RLPLTCLLLEVVMVILFGVFV. The Extracellular segment spans residues 31–51; that stretch reads RYDFDADAHWWSWRTEFYYRY. The helical transmembrane segment at 52–72 threads the bilayer; sequence PSFQDVHVMVFVGFGFLMTFL. Over 73-76 the chain is Cytoplasmic; sequence QRYG. The chain crosses the membrane as a helical span at residues 77–97; it reads FSAVGFNFLLAAFGIQWALLM. Over 98 to 114 the chain is Extracellular; that stretch reads QGWFHFLQGRYIVVGVE. A helical transmembrane segment spans residues 115 to 135; that stretch reads NLINADFCVASVCVAFGAVLG. Over 136–139 the chain is Cytoplasmic; that stretch reads KVSP. A helical membrane pass occupies residues 140–160; it reads IQLLIMTFFQVTLFAVNEFIL. At 161-168 the chain is on the extracellular side; that stretch reads LNLLKVKD. A helical transmembrane segment spans residues 169–191; the sequence is AGGSMTIHTFGAYFGLTVTRILY. The Cytoplasmic segment spans residues 192 to 209; the sequence is RRNLEQSKERQNSVYQSD. The helical transmembrane segment at 210 to 230 threads the bilayer; the sequence is LFAMIGTLFLWMYWPSFNSAI. Residues 231–241 are Extracellular-facing; it reads SYHGDSQHRAA. A helical transmembrane segment spans residues 242–262; sequence INTYCSLAACVLTSVAISSAL. Residues 263-294 are Cytoplasmic-facing; sequence HKKGKLDMVHIQNATPAGGVAVGTAAEMMLMP. Residues 295-315 traverse the membrane as a helical segment; the sequence is YGALIVGFVCGIISTLGFVYL. The Extracellular segment spans residues 316-336; the sequence is TPFLESRLHIQDTCGINNLHG. A helical transmembrane segment spans residues 337 to 357; sequence IPGIIGGIVGAVTAASASLEV. Residues 358–388 are Cytoplasmic-facing; that stretch reads YGKEGLVHSFDFQGFKRDWTARTQGKFQIYG. Residues 389–409 traverse the membrane as a helical segment; sequence LLVTLAMALMGGIIVGVGLIL. Residues 410–450 lie on the Extracellular side of the membrane; that stretch reads RLPFWGQPSDENCFEDAVYWEMPEGNSTVYIPEDPTFKPSG. N435 carries an N-linked (GlcNAc...) asparagine glycan. Residues 451–471 traverse the membrane as a helical segment; sequence PSVPSVPMVSPLPMASSVPLV. Residue P472 is a topological domain, cytoplasmic.

This sequence belongs to the ammonium transporter (TC 2.A.49) family. Rh subfamily. Homotrimer. In terms of processing, N-glycosylated.

The protein localises to the cell membrane. Its subcellular location is the apical cell membrane. It carries out the reaction NH4(+)(in) = NH4(+)(out). The catalysed reaction is methylamine(out) = methylamine(in). The enzyme catalyses CO2(out) = CO2(in). Functionally, ammonium transporter involved in the maintenance of acid-base homeostasis. Transports ammonium and its related derivative methylammonium across the plasma membrane of epithelial cells likely contributing to renal transepithelial ammonia transport and ammonia metabolism. Postulated to primarily mediate an electroneutral bidirectional transport of NH3 ammonia species according to a mechanism that implies interaction of an NH4(+) ion with acidic residues of the pore entry followed by dissociation of NH4(+) into NH3 and H(+). As a result NH3 transits through the central pore and is protonated on the extracellular side reforming NH4(+). May act as a CO2 channel providing for renal acid secretion. In Pongo abelii (Sumatran orangutan), this protein is Ammonium transporter Rh type C (RHCG).